Here is a 279-residue protein sequence, read N- to C-terminus: Beta-lactamase (279 aa).

The N-terminal stretch at 1–21 is a signal peptide; it reads MRYVRLCVISLLATLPLVVYA. Ser-66 serves as the catalytic Acyl-ester intermediate. Cys-73 and Cys-119 are disulfide-bonded. 230–232 lines the substrate pocket; the sequence is KTG.

This sequence belongs to the class-A beta-lactamase family.

The catalysed reaction is a beta-lactam + H2O = a substituted beta-amino acid. In Klebsiella pneumoniae, this protein is Beta-lactamase.